The primary structure comprises 621 residues: 2-hydroxyacyl-CoA lyase 2 (621 aa).

The chain crosses the membrane as a helical span at residues Leu-7–Tyr-29. Glu-87 provides a ligand contact to thiamine diphosphate. The segment at Asp-459–Cys-539 is thiamine pyrophosphate binding. Mg(2+)-binding residues include Asp-510 and Asn-536.

It belongs to the TPP enzyme family. Mg(2+) serves as cofactor. Requires thiamine diphosphate as cofactor.

Its subcellular location is the endoplasmic reticulum membrane. It catalyses the reaction 2-hydroxyoctadecanoyl-CoA = heptadecanal + formyl-CoA. It carries out the reaction (2R)-hydroxyhexadecanoyl-CoA = pentadecanal + formyl-CoA. In terms of biological role, endoplasmic reticulum 2-OH acyl-CoA lyase involved in the cleavage (C1 removal) reaction in the fatty acid alpha-oxydation in a thiamine pyrophosphate (TPP)-dependent manner. This Danio rerio (Zebrafish) protein is 2-hydroxyacyl-CoA lyase 2 (ilvbl).